Consider the following 37-residue polypeptide: MKVNPSVKPICDKCRVIRRHGRVMVICSDPRHKQRQG.

This sequence belongs to the bacterial ribosomal protein bL36 family.

This is Large ribosomal subunit protein bL36 from Mycobacterium ulcerans (strain Agy99).